The chain runs to 168 residues: NAD(P)H-quinone oxidoreductase subunit J, chloroplastic (168 aa).

This sequence belongs to the complex I 30 kDa subunit family. In terms of assembly, NDH is composed of at least 16 different subunits, 5 of which are encoded in the nucleus.

Its subcellular location is the plastid. The protein resides in the chloroplast thylakoid membrane. It catalyses the reaction a plastoquinone + NADH + (n+1) H(+)(in) = a plastoquinol + NAD(+) + n H(+)(out). The enzyme catalyses a plastoquinone + NADPH + (n+1) H(+)(in) = a plastoquinol + NADP(+) + n H(+)(out). In terms of biological role, NDH shuttles electrons from NAD(P)H:plastoquinone, via FMN and iron-sulfur (Fe-S) centers, to quinones in the photosynthetic chain and possibly in a chloroplast respiratory chain. The immediate electron acceptor for the enzyme in this species is believed to be plastoquinone. Couples the redox reaction to proton translocation, and thus conserves the redox energy in a proton gradient. The sequence is that of NAD(P)H-quinone oxidoreductase subunit J, chloroplastic from Chaetosphaeridium globosum (Charophycean green alga).